A 160-amino-acid polypeptide reads, in one-letter code: Cytochrome b6-f complex subunit 4 (160 aa).

The next 3 helical transmembrane spans lie at 36–56, 95–115, and 131–151; these read LLYIFPVVILGTIACTVGLAV, LLGVLLMAAVPAGLLTVPFLE, and TIFLIGTAVAIWLGIGAALPI.

It belongs to the cytochrome b family. PetD subfamily. As to quaternary structure, the 4 large subunits of the cytochrome b6-f complex are cytochrome b6, subunit IV (17 kDa polypeptide, petD), cytochrome f and the Rieske protein, while the 4 small subunits are petG, petL, petM and petN. The complex functions as a dimer.

The protein localises to the plastid. It localises to the chloroplast thylakoid membrane. Component of the cytochrome b6-f complex, which mediates electron transfer between photosystem II (PSII) and photosystem I (PSI), cyclic electron flow around PSI, and state transitions. This Anthoceros angustus (Hornwort) protein is Cytochrome b6-f complex subunit 4.